Consider the following 445-residue polypeptide: Putative H/ACA ribonucleoprotein complex subunit 4 (445 aa).

Residues 1–32 are disordered; the sequence is MGKKDKRSKLEGDELAEAQQKGSFQLPSSNET. The span at 20–32 shows a compositional bias: polar residues; the sequence is QKGSFQLPSSNET. The Nucleophile role is filled by aspartate 113. The region spanning 284-359 is the PUA domain; it reads HKRVVVKDSC…IVAKSKRVIM (76 aa). The disordered stretch occupies residues 407–445; that stretch reads TDKVKKEQEDKEDEEEEEAPKKKSKKAAKKEVSSSSDSE.

Belongs to the pseudouridine synthase TruB family. As to quaternary structure, component of the small nucleolar ribonucleoprotein particle containing H/ACA-type snoRNAs (H/ACA snoRNPs).

It localises to the nucleus. The protein localises to the nucleolus. It catalyses the reaction a uridine in RNA = a pseudouridine in RNA. Plays a central role in ribosomal RNA processing. Probable catalytic subunit of H/ACA small nucleolar ribonucleoprotein (H/ACA snoRNP) complex, which catalyzes pseudouridylation of rRNA. This involves the isomerization of uridine such that the ribose is subsequently attached to C5, instead of the normal N1. Pseudouridine ('psi') residues may serve to stabilize the conformation of rRNAs. This is Putative H/ACA ribonucleoprotein complex subunit 4 from Caenorhabditis briggsae.